Consider the following 415-residue polypeptide: 8-amino-7-oxononanoate synthase (415 aa).

Position 21 (Arg21) interacts with substrate. Position 117 to 118 (117 to 118 (GY)) interacts with pyridoxal 5'-phosphate. Substrate is bound at residue His149. Pyridoxal 5'-phosphate is bound by residues Ser195, His223, and Thr251. Lys254 is subject to N6-(pyridoxal phosphate)lysine. Thr374 contributes to the substrate binding site.

The protein belongs to the class-II pyridoxal-phosphate-dependent aminotransferase family. BioF subfamily. In terms of assembly, homodimer. The cofactor is pyridoxal 5'-phosphate.

It catalyses the reaction 6-carboxyhexanoyl-[ACP] + L-alanine + H(+) = (8S)-8-amino-7-oxononanoate + holo-[ACP] + CO2. It functions in the pathway cofactor biosynthesis; biotin biosynthesis. Functionally, catalyzes the decarboxylative condensation of pimeloyl-[acyl-carrier protein] and L-alanine to produce 8-amino-7-oxononanoate (AON), [acyl-carrier protein], and carbon dioxide. In Ralstonia pickettii (strain 12J), this protein is 8-amino-7-oxononanoate synthase.